The chain runs to 567 residues: Potassium-transporting ATPase potassium-binding subunit (567 aa).

A run of 12 helical transmembrane segments spans residues 3 to 23 (MIGWLQIILFCVIIVALTKPL), 64 to 84 (LTYTVAMLLFHVGGFLVIYGV), 136 to 156 (GLTHQNFLSAATGIALAMALI), 179 to 199 (LYVLLPICVVYTLFLVWQGIP), 220 to 240 (VGPVASQVAIKMLGTNGGGFF), 254 to 274 (LSNFVQMLSIFALGAALTNVF), 285 to 305 (WAILAVMGVLFVAGVAVTYWA), 330 to 350 (FGLVASSLFAVITTAASCGAV), 374 to 394 (IIVGGVGAGLYGMLLFVVLAI), 420 to 440 (AMLAILVLPLMYLGWTAVGVV), 488 to 508 (LASAMFVGRFFMIVPAMAIAG), and 527 to 547 (GGLFVGLVVGVILIIGGLTFF).

It belongs to the KdpA family. The system is composed of three essential subunits: KdpA, KdpB and KdpC.

It is found in the cell inner membrane. Its function is as follows. Part of the high-affinity ATP-driven potassium transport (or Kdp) system, which catalyzes the hydrolysis of ATP coupled with the electrogenic transport of potassium into the cytoplasm. This subunit binds the periplasmic potassium ions and delivers the ions to the membrane domain of KdpB through an intramembrane tunnel. In Bradyrhizobium diazoefficiens (strain JCM 10833 / BCRC 13528 / IAM 13628 / NBRC 14792 / USDA 110), this protein is Potassium-transporting ATPase potassium-binding subunit.